Consider the following 144-residue polypeptide: 3-hydroxyacyl-[acyl-carrier-protein] dehydratase FabZ (144 aa).

The active site involves His48.

Belongs to the thioester dehydratase family. FabZ subfamily.

The protein resides in the cytoplasm. It catalyses the reaction a (3R)-hydroxyacyl-[ACP] = a (2E)-enoyl-[ACP] + H2O. In terms of biological role, involved in unsaturated fatty acids biosynthesis. Catalyzes the dehydration of short chain beta-hydroxyacyl-ACPs and long chain saturated and unsaturated beta-hydroxyacyl-ACPs. This Bacillus cereus (strain AH187) protein is 3-hydroxyacyl-[acyl-carrier-protein] dehydratase FabZ.